The chain runs to 341 residues: Malate dehydrogenase 2, mitochondrial (341 aa).

A mitochondrion-targeting transit peptide spans 1 to 22; the sequence is MFRSMIVRSASPVKQGLLRRGF. NAD(+) is bound by residues 36–42 and aspartate 62; that span reads GAAGGIG. Positions 109 and 115 each coordinate substrate. Residues asparagine 122 and 145–147 each bind NAD(+); that span reads ISN. Residues asparagine 147 and arginine 181 each coordinate substrate. Histidine 205 (proton acceptor) is an active-site residue. Methionine 256 contacts NAD(+).

This sequence belongs to the LDH/MDH superfamily. MDH type 1 family. Homodimer. As to expression, expressed in rosette leaves at low levels.

Its subcellular location is the mitochondrion matrix. The enzyme catalyses (S)-malate + NAD(+) = oxaloacetate + NADH + H(+). Functionally, catalyzes a reversible NAD-dependent dehydrogenase reaction involved in central metabolism and redox homeostasis between organelle compartments. Required for carbon dioxide and energy partitioning in leaves. May limit photorespiration during the dark phase. Can convert 2-ketoglutarate to L-2-hydroxyglutarate in vitro. In Arabidopsis thaliana (Mouse-ear cress), this protein is Malate dehydrogenase 2, mitochondrial.